Here is a 321-residue protein sequence, read N- to C-terminus: Phosphate metabolism protein 8 (321 aa).

It belongs to the SSM1 family.

In terms of biological role, may be involved in phosphate metabolism. This Saccharomyces cerevisiae (strain ATCC 204508 / S288c) (Baker's yeast) protein is Phosphate metabolism protein 8 (PHM8).